The sequence spans 61 residues: Small ribosomal subunit protein uS14B (61 aa).

Zn(2+)-binding residues include Cys24, Cys27, Cys40, and Cys43.

This sequence belongs to the universal ribosomal protein uS14 family. Zinc-binding uS14 subfamily. In terms of assembly, part of the 30S ribosomal subunit. Contacts proteins S3 and S10. Requires Zn(2+) as cofactor.

Its function is as follows. Binds 16S rRNA, required for the assembly of 30S particles and may also be responsible for determining the conformation of the 16S rRNA at the A site. This Mycobacterium bovis (strain ATCC BAA-935 / AF2122/97) protein is Small ribosomal subunit protein uS14B.